A 428-amino-acid polypeptide reads, in one-letter code: BTB/POZ domain-containing protein KCTD16 (428 aa).

Residues E25–D98 form the BTB domain. At Y112 the chain carries Phosphotyrosine. A phosphoserine mark is found at S130, S137, S143, and S146.

In terms of assembly, homopentamer; forms an open pentamer. In contrast to other BTB domain-containing proteins, does not interact with CUL3. Interacts as a tetramer with GABRB1 and GABRB2.

The protein resides in the presynaptic cell membrane. Its subcellular location is the postsynaptic cell membrane. Its function is as follows. Auxiliary subunit of GABA-B receptors that determine the pharmacology and kinetics of the receptor response. Increases agonist potency and markedly alter the G-protein signaling of the receptors by accelerating onset and promoting desensitization. The protein is BTB/POZ domain-containing protein KCTD16 (KCTD16) of Homo sapiens (Human).